The sequence spans 301 residues: Lipoyl synthase (301 aa).

Positions 53, 58, 64, 79, 83, 86, and 290 each coordinate [4Fe-4S] cluster. A Radical SAM core domain is found at 65–279 (WSRKTATYML…RIYGKSIGFK (215 aa)).

It belongs to the radical SAM superfamily. Lipoyl synthase family. The cofactor is [4Fe-4S] cluster.

Its subcellular location is the cytoplasm. It carries out the reaction [[Fe-S] cluster scaffold protein carrying a second [4Fe-4S](2+) cluster] + N(6)-octanoyl-L-lysyl-[protein] + 2 oxidized [2Fe-2S]-[ferredoxin] + 2 S-adenosyl-L-methionine + 4 H(+) = [[Fe-S] cluster scaffold protein] + N(6)-[(R)-dihydrolipoyl]-L-lysyl-[protein] + 4 Fe(3+) + 2 hydrogen sulfide + 2 5'-deoxyadenosine + 2 L-methionine + 2 reduced [2Fe-2S]-[ferredoxin]. It participates in protein modification; protein lipoylation via endogenous pathway; protein N(6)-(lipoyl)lysine from octanoyl-[acyl-carrier-protein]: step 2/2. In terms of biological role, catalyzes the radical-mediated insertion of two sulfur atoms into the C-6 and C-8 positions of the octanoyl moiety bound to the lipoyl domains of lipoate-dependent enzymes, thereby converting the octanoylated domains into lipoylated derivatives. This chain is Lipoyl synthase, found in Leptospira interrogans serogroup Icterohaemorrhagiae serovar copenhageni (strain Fiocruz L1-130).